The chain runs to 816 residues: Phosphatidylinositol 4-kinase beta (816 aa).

Disordered regions lie at residues 1-28 (MGDTVVAPAPLKPASESTPGPPGNNGGS), 93-120 (PPTGIREEDDETEATVASGTAKGARRRR), and 249-318 (HRKR…SFSS). Glycine 2 is subject to N-acetylglycine. Positions 2-68 (GDTVVAPAPL…VKLSHGGVAS (67 aa)) are interaction with ACBD3. The PIK helical domain occupies 49-242 (QKACQEVLQK…GTKLRRLILS (194 aa)). A Phosphoserine modification is found at serine 258. At threonine 263 the chain carries Phosphothreonine. Phosphoserine occurs at positions 266, 275, 277, 284, 294, 428, and 511. The span at 278 to 294 (DATASISLSSSLKRTAS) shows a compositional bias: low complexity. Residues threonine 517 and threonine 519 each carry the phosphothreonine modification. One can recognise a PI3K/PI4K catalytic domain in the interval 535–801 (EPWQEKVRRI…MVDGSMRSIT (267 aa)). Residues 541–547 (VRRIREG) are G-loop. The tract at residues 668–676 (QVKDRHNGN) is catalytic loop. The interval 687–711 (HIDFGFILSSSPRNLGFETSAFKLT) is activation loop.

The protein belongs to the PI3/PI4-kinase family. Type III PI4K subfamily. In terms of assembly, interacts with ARF1 and ARF3 in the Golgi complex, but not with ARF4, ARF5 or ARF6. Interacts with NCS1/FREQ in a calcium-independent manner. Interacts with CALN1/CABP8 and CALN2/CABP7; in a calcium-dependent manner; this interaction competes with NCS1/FREQ binding. Interacts with ACBD3. Interacts with ARMH3, YWHAB, YWHAE, YWHAG, YWHAH, YWHAQ, YWHAZ and SFN. Interacts with GGA2 (via VHS domain); the interaction is important for PI4KB location at the Golgi apparatus membrane. Interacts with ATG9A. Mg(2+) serves as cofactor. Mn(2+) is required as a cofactor.

Its subcellular location is the endomembrane system. It localises to the mitochondrion outer membrane. It is found in the rough endoplasmic reticulum membrane. The protein resides in the golgi apparatus. The protein localises to the golgi apparatus membrane. It carries out the reaction a 1,2-diacyl-sn-glycero-3-phospho-(1D-myo-inositol) + ATP = a 1,2-diacyl-sn-glycero-3-phospho-(1D-myo-inositol 4-phosphate) + ADP + H(+). Inhibited by wortmannin. Increased kinase activity upon interaction with NCS1/FREQ. Its function is as follows. Phosphorylates phosphatidylinositol (PI) in the first committed step in the production of the second messenger inositol-1,4,5,-trisphosphate (PIP). May regulate Golgi disintegration/reorganization during mitosis, possibly via its phosphorylation. Involved in Golgi-to-plasma membrane trafficking. May play an important role in the inner ear development. This is Phosphatidylinositol 4-kinase beta (PI4KB) from Rhinolophus ferrumequinum (Greater horseshoe bat).